Consider the following 122-residue polypeptide: Large ribosomal subunit protein uL14 (122 aa).

The protein belongs to the universal ribosomal protein uL14 family. As to quaternary structure, part of the 50S ribosomal subunit. Forms a cluster with proteins L3 and L19. In the 70S ribosome, L14 and L19 interact and together make contacts with the 16S rRNA in bridges B5 and B8.

In terms of biological role, binds to 23S rRNA. Forms part of two intersubunit bridges in the 70S ribosome. This is Large ribosomal subunit protein uL14 from Desulforapulum autotrophicum (strain ATCC 43914 / DSM 3382 / VKM B-1955 / HRM2) (Desulfobacterium autotrophicum).